Reading from the N-terminus, the 233-residue chain is Large ribosomal subunit protein uL1 (233 aa).

Belongs to the universal ribosomal protein uL1 family. In terms of assembly, part of the 50S ribosomal subunit.

Binds directly to 23S rRNA. The L1 stalk is quite mobile in the ribosome, and is involved in E site tRNA release. Functionally, protein L1 is also a translational repressor protein, it controls the translation of the L11 operon by binding to its mRNA. In Shewanella woodyi (strain ATCC 51908 / MS32), this protein is Large ribosomal subunit protein uL1.